The following is a 346-amino-acid chain: RNA polymerase II holoenzyme cyclin-like subunit (346 aa).

Residues 59–158 (NLLIKLGRRL…EMDSYLFLHH (100 aa)) enclose the Cyclin N-terminal domain.

Belongs to the cyclin family. Cyclin C subfamily. In terms of assembly, component of the SRB8-11 complex, a regulatory module of the Mediator complex.

Its subcellular location is the nucleus. Functionally, component of the SRB8-11 complex. The SRB8-11 complex is a regulatory module of the Mediator complex which is itself involved in regulation of basal and activated RNA polymerase II-dependent transcription. The SRB8-11 complex may be involved in the transcriptional repression of a subset of genes regulated by Mediator. It may inhibit the association of the Mediator complex with RNA polymerase II to form the holoenzyme complex. The SRB8-11 complex phosphorylates the C-terminal domain (CTD) of the largest subunit of RNA polymerase II. The protein is RNA polymerase II holoenzyme cyclin-like subunit (SSN8) of Scheffersomyces stipitis (strain ATCC 58785 / CBS 6054 / NBRC 10063 / NRRL Y-11545) (Yeast).